We begin with the raw amino-acid sequence, 293 residues long: Acetylglutamate kinase (293 aa).

Residues 66–67 (GG), Arg-88, and Asn-190 each bind substrate.

This sequence belongs to the acetylglutamate kinase family. ArgB subfamily.

It localises to the cytoplasm. The enzyme catalyses N-acetyl-L-glutamate + ATP = N-acetyl-L-glutamyl 5-phosphate + ADP. Its pathway is amino-acid biosynthesis; L-arginine biosynthesis; N(2)-acetyl-L-ornithine from L-glutamate: step 2/4. In terms of biological role, catalyzes the ATP-dependent phosphorylation of N-acetyl-L-glutamate. The sequence is that of Acetylglutamate kinase from Thiobacillus denitrificans (strain ATCC 25259 / T1).